The following is a 102-amino-acid chain: Small ribosomal subunit protein uS10 (102 aa).

Belongs to the universal ribosomal protein uS10 family. Part of the 30S ribosomal subunit.

Involved in the binding of tRNA to the ribosomes. The polypeptide is Small ribosomal subunit protein uS10 (Staphylococcus haemolyticus (strain JCSC1435)).